Consider the following 243-residue polypeptide: UPF0758 protein Tery_2667 (243 aa).

The MPN domain maps to 113–235; it reads VVESPQAAAD…HSSLRQITNL (123 aa). Zn(2+)-binding residues include His-184, His-186, and Asp-197. Residues 184 to 197 carry the JAMM motif motif; that stretch reads HNHPSGNVEPSPED.

It belongs to the UPF0758 family.

This Trichodesmium erythraeum (strain IMS101) protein is UPF0758 protein Tery_2667.